Reading from the N-terminus, the 216-residue chain is Large ribosomal subunit protein uL3 (216 aa).

The disordered stretch occupies residues 135–156 (LGASHGTQRKHRSPGSIGGCAT).

This sequence belongs to the universal ribosomal protein uL3 family. In terms of assembly, part of the 50S ribosomal subunit. Forms a cluster with proteins L14 and L19.

Its function is as follows. One of the primary rRNA binding proteins, it binds directly near the 3'-end of the 23S rRNA, where it nucleates assembly of the 50S subunit. The polypeptide is Large ribosomal subunit protein uL3 (Thermobifida fusca (strain YX)).